Reading from the N-terminus, the 334-residue chain is Fructose-1,6-bisphosphatase class 1 (334 aa).

Positions 87, 106, 108, and 109 each coordinate Mg(2+). Substrate contacts are provided by residues 109–112, Asn208, and Lys274; that span reads DGSS. Glu280 lines the Mg(2+) pocket.

The protein belongs to the FBPase class 1 family. In terms of assembly, homotetramer. It depends on Mg(2+) as a cofactor.

The protein localises to the cytoplasm. The catalysed reaction is beta-D-fructose 1,6-bisphosphate + H2O = beta-D-fructose 6-phosphate + phosphate. It functions in the pathway carbohydrate biosynthesis; gluconeogenesis. The chain is Fructose-1,6-bisphosphatase class 1 from Psychrobacter sp. (strain PRwf-1).